The following is a 256-amino-acid chain: Probable transcriptional regulatory protein cce_0894 (256 aa).

Belongs to the TACO1 family.

It is found in the cytoplasm. The sequence is that of Probable transcriptional regulatory protein cce_0894 from Crocosphaera subtropica (strain ATCC 51142 / BH68) (Cyanothece sp. (strain ATCC 51142)).